The primary structure comprises 588 residues: Probable cytochrome c oxidase subunit 1-beta (588 aa).

The interval 1–26 (MTATPAQRRPALPATRPYPARHGPKG) is disordered. Residues 43–63 (VLYLVSATGFFLIGGLLALLM) form a helical membrane-spanning segment. His87 is a binding site for Fe(II)-heme a. 6 helical membrane passes run 90–110 (IMLL…VLPL), 128–148 (WLYL…GGAA), 171–191 (LWIL…VNMI), 214–234 (ILIT…ALMA), 259–279 (LFWF…FGII), and 291–311 (IFGY…SMAV). Cu cation-binding residues include His265 and Tyr269. The 1'-histidyl-3'-tyrosine (His-Tyr) cross-link spans 265–269 (HPEVY). Residues His314 and His315 each contribute to the Cu cation site. The next 2 membrane-spanning stretches (helical) occupy residues 320–340 (GAVL…PTGV) and 360–380 (MLFA…GVIL). His398 contacts heme a3. The next 3 helical transmembrane spans lie at 399 to 419 (FHYV…YFWF), 434 to 454 (LHFW…HWLG), and 477 to 497 (VSTI…WNGF). His400 serves as a coordination point for Fe(II)-heme a. The segment at 557 to 588 (AEAHAGRRAGHGAGAELSVPSTVATKDDDHTS) is disordered.

Belongs to the heme-copper respiratory oxidase family. Associates with subunits II, III and IV to form cytochrome c oxidase. Requires Cu(2+) as cofactor. The cofactor is heme.

It is found in the cell membrane. The catalysed reaction is 4 Fe(II)-[cytochrome c] + O2 + 8 H(+)(in) = 4 Fe(III)-[cytochrome c] + 2 H2O + 4 H(+)(out). Its pathway is energy metabolism; oxidative phosphorylation. Cytochrome c oxidase is the component of the respiratory chain that catalyzes the reduction of oxygen to water. Subunits 1-3 form the functional core of the enzyme complex. CO I is the catalytic subunit of the enzyme. Electrons originating in cytochrome c are transferred via the copper A center of subunit 2 and heme A of subunit 1 to the bimetallic center formed by heme A3 and copper B. The protein is Probable cytochrome c oxidase subunit 1-beta (ctaD2) of Nocardia farcinica (strain IFM 10152).